The following is a 274-amino-acid chain: Cytochrome b-c1 complex subunit Rieske, mitochondrial (274 aa).

Residues 79–103 (SHTDVKVPDFYDYRRLEVLDSTKSS) lie on the Mitochondrial matrix side of the membrane. A helical membrane pass occupies residues 104-140 (RESSEARKGFSYLVTAVTTVGVAYAAKNVVTQFISSM). At 141–274 (SASADVLAMA…FTGDDVVVVG (134 aa)) the chain is on the mitochondrial intermembrane side. The Rieske domain maps to 187–272 (EAAVELSQLR…YEFTGDDVVV (86 aa)). Positions 217, 219, 236, 239, and 241 each coordinate [2Fe-2S] cluster. Residues C222 and C238 are joined by a disulfide bond.

This sequence belongs to the Rieske iron-sulfur protein family. In terms of assembly, component of the ubiquinol-cytochrome c oxidoreductase (cytochrome b-c1 complex, complex III, CIII), a multisubunit enzyme composed of 11 subunits. The complex is composed of 3 respiratory subunits cytochrome b, cytochrome c1 and Rieske protein UQCRFS1, 2 core protein subunits UQCRC1/QCR1 and UQCRC2/QCR2, and 6 low-molecular weight protein subunits UQCRH/QCR6, UQCRB/QCR7, UQCRQ/QCR8, UQCR10/QCR9, UQCR11/QCR10 and subunit 9, the cleavage product of Rieske protein UQCRFS1. The complex exists as an obligatory dimer and forms supercomplexes (SCs) in the inner mitochondrial membrane with NADH-ubiquinone oxidoreductase (complex I, CI) and cytochrome c oxidase (complex IV, CIV), resulting in different assemblies (supercomplex SCI(1)III(2)IV(1) and megacomplex MCI(2)III(2)IV(2)). Incorporation of the Rieske protein UQCRFS1 is the penultimate step in complex III assembly. Interacts with TTC19, which is involved in the clearance of UQCRFS1 fragments. As to quaternary structure, component of the ubiquinol-cytochrome c oxidoreductase (cytochrome b-c1 complex, complex III, CIII). Subunit 9 corresponds to the mitochondrial targeting sequence (MTS) of Rieske protein UQCRFS1. It is retained after processing and incorporated inside complex III, where it remains bound to the complex and localizes between the 2 core subunits UQCRC1/QCR1 and UQCRC2/QCR2. [2Fe-2S] cluster is required as a cofactor. In terms of processing, proteolytic processing is necessary for the correct insertion of UQCRFS1 in the complex III dimer. Several fragments are generated during UQCRFS1 insertion, most probably due to the endogenous matrix-processing peptidase (MPP) activity of the 2 core protein subunits UQCRC1/QCR1 and UQCRC2/QCR2, which are homologous to the 2 mitochondrial-processing peptidase (MPP) subunits beta-MPP and alpha-MPP respectively. The action of the protease is also necessary for the clearance of the UQCRFS1 fragments.

It localises to the mitochondrion inner membrane. It carries out the reaction a quinol + 2 Fe(III)-[cytochrome c](out) = a quinone + 2 Fe(II)-[cytochrome c](out) + 2 H(+)(out). Component of the ubiquinol-cytochrome c oxidoreductase, a multisubunit transmembrane complex that is part of the mitochondrial electron transport chain which drives oxidative phosphorylation. The respiratory chain contains 3 multisubunit complexes succinate dehydrogenase (complex II, CII), ubiquinol-cytochrome c oxidoreductase (cytochrome b-c1 complex, complex III, CIII) and cytochrome c oxidase (complex IV, CIV), that cooperate to transfer electrons derived from NADH and succinate to molecular oxygen, creating an electrochemical gradient over the inner membrane that drives transmembrane transport and the ATP synthase. The cytochrome b-c1 complex catalyzes electron transfer from ubiquinol to cytochrome c, linking this redox reaction to translocation of protons across the mitochondrial inner membrane, with protons being carried across the membrane as hydrogens on the quinol. In the process called Q cycle, 2 protons are consumed from the matrix, 4 protons are released into the intermembrane space and 2 electrons are passed to cytochrome c. The Rieske protein is a catalytic core subunit containing a [2Fe-2S] iron-sulfur cluster. It cycles between 2 conformational states during catalysis to transfer electrons from the quinol bound in the Q(0) site in cytochrome b to cytochrome c1. Incorporation of UQCRFS1 is the penultimate step in complex III assembly. Its function is as follows. Component of the ubiquinol-cytochrome c oxidoreductase (cytochrome b-c1 complex, complex III, CIII). UQCRFS1 undergoes proteolytic processing once it is incorporated in the complex III dimer. One of the fragments, called subunit 9, corresponds to its mitochondrial targeting sequence (MTS). The proteolytic processing is necessary for the correct insertion of UQCRFS1 in the complex III dimer, but the persistence of UQCRFS1-derived fragments may prevent newly imported UQCRFS1 to be processed and assembled into complex III and is detrimental for the complex III structure and function. This Chlorocebus aethiops (Green monkey) protein is Cytochrome b-c1 complex subunit Rieske, mitochondrial (UQCRFS1).